The primary structure comprises 278 residues: Urease accessory protein UreD (278 aa).

Belongs to the UreD family. In terms of assembly, ureD, UreF and UreG form a complex that acts as a GTP-hydrolysis-dependent molecular chaperone, activating the urease apoprotein by helping to assemble the nickel containing metallocenter of UreC. The UreE protein probably delivers the nickel.

The protein localises to the cytoplasm. Required for maturation of urease via the functional incorporation of the urease nickel metallocenter. This is Urease accessory protein UreD from Pseudomonas putida (strain ATCC 700007 / DSM 6899 / JCM 31910 / BCRC 17059 / LMG 24140 / F1).